The chain runs to 1792 residues: uncharacterized protein (1792 aa).

The span at Met1–Asn28 shows a compositional bias: low complexity. Disordered regions lie at residues Met1–Gly34, Thr162–His187, Lys440–Ser461, Val544–Asn568, Asn736–Asn777, Thr837–Lys979, Val1044–Ser1071, Asn1084–Lys1106, Thr1160–Arg1215, Asn1257–Gly1290, Leu1651–Lys1686, Pro1704–Lys1731, and Ile1742–Asn1761. Residues Lys169–Lys182 show a composition bias toward polar residues. Residues Lys550–Thr559 show a composition bias toward basic residues. Residues Pro741–Ser776 show a composition bias toward low complexity. Over residues Lys838–Lys847 the composition is skewed to basic residues. A compositionally biased stretch (basic and acidic residues) spans Asn856–Ile873. Residues Asn874–Asn924 are compositionally biased toward low complexity. Residues Lys943 to Lys954 are compositionally biased toward basic residues. Over residues Ile955 to Gln966 the composition is skewed to basic and acidic residues. A compositionally biased stretch (low complexity) spans Ser1045–Pro1057. 3 stretches are compositionally biased toward basic and acidic residues: residues Thr1060–Ser1071, Glu1088–Lys1106, and Asn1166–Asp1192. Over residues Arg1205–Arg1215 the composition is skewed to basic residues. Positions Asn1261 to Asn1289 are enriched in low complexity. Basic residues-rich tracts occupy residues Lys1660–Lys1686 and Pro1704–Lys1717.

This is an uncharacterized protein from Plasmodium falciparum (isolate 3D7).